The chain runs to 193 residues: NADH-quinone oxidoreductase subunit B (193 aa).

4 residues coordinate [4Fe-4S] cluster: Cys49, Cys50, Cys115, and Cys144. Residues 172 to 193 (FKKEEPREANAPVPVNTEMPLE) form a disordered region.

The protein belongs to the complex I 20 kDa subunit family. As to quaternary structure, NDH-1 is composed of 14 different subunits. Subunits NuoB, C, D, E, F, and G constitute the peripheral sector of the complex. [4Fe-4S] cluster is required as a cofactor.

The protein localises to the cell inner membrane. It carries out the reaction a quinone + NADH + 5 H(+)(in) = a quinol + NAD(+) + 4 H(+)(out). Functionally, NDH-1 shuttles electrons from NADH, via FMN and iron-sulfur (Fe-S) centers, to quinones in the respiratory chain. The immediate electron acceptor for the enzyme in this species is believed to be ubiquinone. Couples the redox reaction to proton translocation (for every two electrons transferred, four hydrogen ions are translocated across the cytoplasmic membrane), and thus conserves the redox energy in a proton gradient. In Akkermansia muciniphila (strain ATCC BAA-835 / DSM 22959 / JCM 33894 / BCRC 81048 / CCUG 64013 / CIP 107961 / Muc), this protein is NADH-quinone oxidoreductase subunit B.